The primary structure comprises 217 residues: Carbon disulfide hydrolase (217 aa).

The Zn(2+) site is built by C39, H98, and C101. The segment at 192-217 (DKEKRARTDCTPTPYGVKGNQPPRWK) is disordered.

It belongs to the beta-class carbonic anhydrase family. As to quaternary structure, forms only homooctamers in solution. The cofactor is Zn(2+).

The enzyme catalyses carbon disulfide + 2 H2O = 2 hydrogen sulfide + CO2 + 2 H(+). The protein operates within sulfur metabolism; hydrogen sulfide biosynthesis. In terms of biological role, catalyzes the conversion of carbon disulfide into hydrogen sulfide and carbon dioxide, with carbonyl sulfide as an intermediate. Likely plays a key role in sulfur metabolism that allows A.thiooxidans S1p to grow on carbon disulfide as the main carbon and energy source. Does not show carbonic anhydrase activity (hydration of CO(2) to carbonate). The chain is Carbon disulfide hydrolase from Acidithiobacillus thiooxidans (Thiobacillus thiooxidans).